We begin with the raw amino-acid sequence, 345 residues long: Erythronate-4-phosphate dehydrogenase (345 aa).

Residue S45 coordinates substrate. Residues D146 and T174 each contribute to the NAD(+) site. The active site involves R207. D227 contacts NAD(+). The active site involves E232. H249 (proton donor) is an active-site residue. G252 contributes to the NAD(+) binding site.

The protein belongs to the D-isomer specific 2-hydroxyacid dehydrogenase family. PdxB subfamily. As to quaternary structure, homodimer.

Its subcellular location is the cytoplasm. The catalysed reaction is 4-phospho-D-erythronate + NAD(+) = (R)-3-hydroxy-2-oxo-4-phosphooxybutanoate + NADH + H(+). The protein operates within cofactor biosynthesis; pyridoxine 5'-phosphate biosynthesis; pyridoxine 5'-phosphate from D-erythrose 4-phosphate: step 2/5. Functionally, catalyzes the oxidation of erythronate-4-phosphate to 3-hydroxy-2-oxo-4-phosphonooxybutanoate. This Ruthia magnifica subsp. Calyptogena magnifica protein is Erythronate-4-phosphate dehydrogenase.